A 264-amino-acid polypeptide reads, in one-letter code: tRNA (guanine-N(1)-)-methyltransferase (264 aa).

Residues glycine 125 and leucine 145–leucine 150 each bind S-adenosyl-L-methionine.

It belongs to the RNA methyltransferase TrmD family. Homodimer.

The protein localises to the cytoplasm. The enzyme catalyses guanosine(37) in tRNA + S-adenosyl-L-methionine = N(1)-methylguanosine(37) in tRNA + S-adenosyl-L-homocysteine + H(+). Functionally, specifically methylates guanosine-37 in various tRNAs. The protein is tRNA (guanine-N(1)-)-methyltransferase of Burkholderia ambifaria (strain MC40-6).